The sequence spans 478 residues: Puromycin-sensitive aminopeptidase-like protein (478 aa).

Substrate-binding positions include Glu-180 and 316 to 320; that span reads GAMEN. Zn(2+) is bound at residue His-352. The Proton acceptor role is filled by Glu-353. The Zn(2+) site is built by His-356 and Glu-375.

This sequence belongs to the peptidase M1 family. Zn(2+) is required as a cofactor.

Its function is as follows. Aminopeptidase with broad substrate specificity to several peptides. The polypeptide is Puromycin-sensitive aminopeptidase-like protein (NPEPPSL1) (Homo sapiens (Human)).